A 469-amino-acid chain; its full sequence is Citrate synthase, mitochondrial (469 aa).

The transit peptide at methionine 1–serine 31 directs the protein to the mitochondrion. Catalysis depends on residues histidine 304 and histidine 350. Residue arginine 359 participates in oxaloacetate binding. Aspartate 405 is an active-site residue. Residues arginine 431 and arginine 451 each coordinate oxaloacetate.

The protein belongs to the citrate synthase family. In terms of assembly, homodimer.

It localises to the mitochondrion matrix. The enzyme catalyses oxaloacetate + acetyl-CoA + H2O = citrate + CoA + H(+). It functions in the pathway carbohydrate metabolism; tricarboxylic acid cycle; isocitrate from oxaloacetate: step 1/2. Its function is as follows. Key enzyme of the Krebs tricarboxylic acid cycle which catalyzes the synthesis of citrate from acetyl coenzyme A and oxaloacetate. This chain is Citrate synthase, mitochondrial (CS), found in Amblyrhynchus cristatus (Galapagos marine iguana).